The chain runs to 273 residues: SPRY domain-containing SOCS box protein 1 (273 aa).

Y31 carries the post-translational modification Phosphotyrosine. Positions 33–231 constitute a B30.2/SPRY domain; sequence KPTRLDLLLD…IRMRYLNGLD (199 aa). The region spanning 232–273 is the SOCS box domain; that stretch reads PEPLPLMDLCRRSVRLALGKERLGAIPALPLPASLKAYLLYQ.

This sequence belongs to the SPSB family. In terms of assembly, component of the probable ECS(SPSB1) E3 ubiquitin-protein ligase complex which contains CUL5, RNF7/RBX2, Elongin BC complex and SPSB1. Interacts with CUL5, RNF7, ELOB and ELOC. Directly interacts with MET tyrosine kinase domain in the presence and in the absence of HGF, however HGF treatment has a positive effect on this interaction. When phosphorylated, interacts with RASA1 without affecting its stability. Interacts (via B30.2/SPRY domain) with PAWR; this interaction is direct and occurs in association with the Elongin BC complex. Interacts with EPHB2. Interacts with NOS2.

The protein resides in the cytoplasm. It is found in the cytosol. Its pathway is protein modification; protein ubiquitination. In terms of biological role, substrate recognition component of a SCF-like ECS (Elongin BC-CUL2/5-SOCS-box protein) E3 ubiquitin-protein ligase complex which mediates the ubiquitination and subsequent proteasomal degradation of target proteins. Negatively regulates nitric oxide (NO) production and limits cellular toxicity in activated macrophages by mediating the ubiquitination and proteasomal degradation of NOS2. Acts as a bridge which links the NOS2 with the ECS E3 ubiquitin ligase complex components ELOC and CUL5. In Mus musculus (Mouse), this protein is SPRY domain-containing SOCS box protein 1 (Spsb1).